A 277-amino-acid chain; its full sequence is Urease accessory protein UreD (277 aa).

Belongs to the UreD family. UreD, UreF and UreG form a complex that acts as a GTP-hydrolysis-dependent molecular chaperone, activating the urease apoprotein by helping to assemble the nickel containing metallocenter of UreC. The UreE protein probably delivers the nickel.

It localises to the cytoplasm. Its function is as follows. Required for maturation of urease via the functional incorporation of the urease nickel metallocenter. The protein is Urease accessory protein UreD of Pseudomonas putida (strain W619).